Here is a 72-residue protein sequence, read N- to C-terminus: MTVVNTEIKFPTHLRAGDFAIIDGMVVEVTSVEYKPVDQAVYLKYRYHLHGNELSGASLISAYKAVRTLEVS.

In Mycobacterium phage L5 (Mycobacteriophage L5), this protein is Gene 83 protein (83).